A 263-amino-acid polypeptide reads, in one-letter code: MTQPSLNPLVIKLGGAALSCSQTLSQLFGAIASYQQKEQRQIVIVHGGGYLVDELMEKLQLPTVKKNGLRVTPYDQIPLIAGALAGTANKLLQGQAMADGLNAIGLSLADGGLCQVEELDPELGAVGKATPGDSSLLQTILNAGALPIISSIGLTAQGQLMNVNADQAAVAVAGALDAQLVLLSDVSGVLDGKGHLIKSLNQQEADALIAGKVITDGMIVKVQAALEAANDLGRAIEVATWRYPENLEKLFAGESIGTQFLPA.

Residues 48–49, R70, and N162 each bind substrate; that span reads GG.

Belongs to the acetylglutamate kinase family. ArgB subfamily.

It is found in the cytoplasm. The catalysed reaction is N-acetyl-L-glutamate + ATP = N-acetyl-L-glutamyl 5-phosphate + ADP. It participates in amino-acid biosynthesis; L-arginine biosynthesis; N(2)-acetyl-L-ornithine from L-glutamate: step 2/4. Catalyzes the ATP-dependent phosphorylation of N-acetyl-L-glutamate. This chain is Acetylglutamate kinase, found in Vibrio vulnificus (strain CMCP6).